The primary structure comprises 479 residues: Odorant receptor coreceptor (479 aa).

The Cytoplasmic segment spans residues 1–43 (MHVQPTKYHGLVLDLMPNIRLMQGFGHFLFRYVSGPVLIRKLY). The helical transmembrane segment at 44 to 64 (SWWNLIMILLQYFAIMGNLVM) threads the bilayer. Topologically, residues 65 to 73 (NTGDVNELT) are extracellular. A helical transmembrane segment spans residues 74-94 (ANTITTLFFTHSVTKFIYVAV). Residues 95–133 (NSEHFYRTLGIWNQPNSHSLFAESDARYHSIALAKMRKL) lie on the Cytoplasmic side of the membrane. The helical transmembrane segment at 134 to 154 (LVMVMVTTVLSVVAWITITFF) threads the bilayer. Residues 155 to 187 (GDSVKNVFDKETNETYTVEIPRLPIKALYPWDA) lie on the Extracellular side of the membrane. Residue N167 is glycosylated (N-linked (GlcNAc...) asparagine). A helical transmembrane segment spans residues 188 to 208 (MSGVPYFFSFVYQAYFLLFSM). Topologically, residues 209 to 344 (CQANLADVMF…VERHKHVVRL (136 aa)) are cytoplasmic. Residues 345 to 365 (VSAIGETYGAALLLHMLTSTI) traverse the membrane as a helical segment. Residues 366–383 (KLTLLAYQATKIDALNVY) lie on the Extracellular side of the membrane. The helical transmembrane segment at 384–404 (GLTVIGYLVYALAQVFLFCIF) threads the bilayer. At 405 to 455 (GNRLIEESSSVMEAAYSCHWYDGSEEAKTFVQIVCQQCQKAMTISGAKFFT) the chain is on the cytoplasmic side. Residues 456 to 476 (VSLDLFASVLGAVVTYFMVLV) traverse the membrane as a helical segment. The Extracellular portion of the chain corresponds to 477 to 479 (QLK).

This sequence belongs to the insect chemoreceptor superfamily. Heteromeric odorant receptor channel (TC 1.A.69) family. Orco subfamily. Heterodimer with conventional odorant receptors (ORs). Expressed in female antenna, maxillary palp and proboscis. Not detected in male tissues.

It is found in the cell membrane. Odorant coreceptor which complexes with conventional odorant receptors (ORs) to form odorant-sensing units, providing sensitive and prolonged odorant signaling and calcium permeability. Orco is a universal and integral part of the functional odorant receptor, involved in the dendritic localization of other olfactory receptors. Required for detecting a host for blood feeding. Plays a key role in preferred attraction of females for humans over non-human hosts for blood feeding. The protein is Odorant receptor coreceptor of Aedes albopictus (Asian tiger mosquito).